Here is a 147-residue protein sequence, read N- to C-terminus: Ponticulin-like protein C2 (147 aa).

Positions 1–20 are cleaved as a signal peptide; it reads MKFTKPLLLLIVAIIASSNA. N118 carries GPI-like-anchor amidated asparagine lipidation. An N-linked (GlcNAc...) asparagine glycan is attached at N118. A propeptide spans 119–147 (removed in mature form); that stretch reads SSESDSSDSTRIGASFALFALALLSMLAL.

Belongs to the ponticulin family. In terms of processing, the GPI-like-anchor contains a phosphoceramide group, rather than a phosphatidyl group.

The protein resides in the cell membrane. The sequence is that of Ponticulin-like protein C2 (ponC2) from Dictyostelium discoideum (Social amoeba).